Reading from the N-terminus, the 174-residue chain is Repair DNA polymerase X (174 aa).

The segment at 42–51 is involved in ssDNA binding; it reads REEKMLNDVD. Residues Asp-49 and Asp-51 each coordinate Mg(2+). Cys-81 and Cys-86 are joined by a disulfide. Asp-100 serves as a coordination point for Mg(2+).

It belongs to the DNA polymerase type-X family. Mg(2+) serves as cofactor.

Its subcellular location is the virion. The enzyme catalyses DNA(n) + a 2'-deoxyribonucleoside 5'-triphosphate = DNA(n+1) + diphosphate. Error-prone polymerase lacking a proofreading 3'-5' exonuclease which catalyzes the gap-filling reaction during the DNA repair process. Specifically binds intermediates in the single-nucleotide base-excision repair process. Also catalyzes DNA polymerization with low nucleotide-insertion fidelity. Probably acts as a strategic DNA mutase, which gives rise to a rapid emergence of variants. Generates mismatched G-G pairs, in that case, the polymerase first binds the deoxynucleotide followed by mismatch formation. Together with the viral DNA ligase, fills the single nucleotide gaps generated by the AP endonuclease. Binds DNA with high affinity via the helix alphaE. The polypeptide is Repair DNA polymerase X (Ornithodoros (relapsing fever ticks)).